The chain runs to 63 residues: MKAQELREKSVEELKTELLNLLREQFNLRMQAASGQLQQSHLLKQVRHNIARVKTLLTEKAGA.

Belongs to the universal ribosomal protein uL29 family.

This is Large ribosomal subunit protein uL29 from Photorhabdus laumondii subsp. laumondii (strain DSM 15139 / CIP 105565 / TT01) (Photorhabdus luminescens subsp. laumondii).